Here is a 468-residue protein sequence, read N- to C-terminus: N-acetyltransferase SLI1 (468 aa).

Its subcellular location is the endoplasmic reticulum. Its function is as follows. Confers resistance to the sphingolipid biosynthesis inhibitor drug myriocin (ISP-1). Inactivates ISP-1 by converting it into N-acetyl-myriocin. Cooperates with YPK1 in mediating resistance to myriocin. This is N-acetyltransferase SLI1 (SLI1) from Saccharomyces cerevisiae (strain ATCC 204508 / S288c) (Baker's yeast).